Reading from the N-terminus, the 136-residue chain is Large ribosomal subunit protein bL17 (136 aa).

The protein belongs to the bacterial ribosomal protein bL17 family. As to quaternary structure, part of the 50S ribosomal subunit. Contacts protein L32.

This Akkermansia muciniphila (strain ATCC BAA-835 / DSM 22959 / JCM 33894 / BCRC 81048 / CCUG 64013 / CIP 107961 / Muc) protein is Large ribosomal subunit protein bL17.